The primary structure comprises 272 residues: HTH-type transcriptional repressor AllR (272 aa).

The segment at 1-20 is disordered; the sequence is MTEVRRRGRPGQAEPTAQKG. The region spanning 21–83 is the HTH iclR-type domain; the sequence is AQALERGIAI…SQLGWWHIGL (63 aa). The H-T-H motif DNA-binding region spans 43–62; the sequence is VSDISGSLDLPLSTTFRLLK. The IclR-ED domain maps to 98–267; the sequence is VLSVAGPFMH…AKDISTALGL (170 aa). Glyoxylate is bound by residues 154–156, aspartate 207, cysteine 217, and 234–236; these read SGA and SIS.

Functionally, negative regulator of allantoin and glyoxylate utilization operons. Binds to the gcl promoter and to the allS-allA intergenic region. The polypeptide is HTH-type transcriptional repressor AllR (allR) (Salmonella typhi).